We begin with the raw amino-acid sequence, 445 residues long: N-succinylarginine dihydrolase (445 aa).

Residues 19-28 (AGLSFGNVAS), Asn-110, and 137-138 (HR) each bind substrate. The active site involves Glu-174. Arg-214 serves as a coordination point for substrate. His-250 is an active-site residue. Substrate is bound by residues Asp-252 and Asn-363. The active-site Nucleophile is Cys-369.

This sequence belongs to the succinylarginine dihydrolase family. In terms of assembly, homodimer.

It catalyses the reaction N(2)-succinyl-L-arginine + 2 H2O + 2 H(+) = N(2)-succinyl-L-ornithine + 2 NH4(+) + CO2. It participates in amino-acid degradation; L-arginine degradation via AST pathway; L-glutamate and succinate from L-arginine: step 2/5. Catalyzes the hydrolysis of N(2)-succinylarginine into N(2)-succinylornithine, ammonia and CO(2). This chain is N-succinylarginine dihydrolase, found in Shewanella sediminis (strain HAW-EB3).